A 65-amino-acid polypeptide reads, in one-letter code: Large ribosomal subunit protein bL35 (65 aa).

Residues 1 to 47 form a disordered region; sequence MPKIKTNRGAAKRFRKTASGKIKRNSAFTSHILTSKTRKRKRQLRSS. The segment covering 10–24 has biased composition (basic residues); that stretch reads AAKRFRKTASGKIKR. Polar residues predominate over residues 26-35; sequence SAFTSHILTS.

It belongs to the bacterial ribosomal protein bL35 family.

This is Large ribosomal subunit protein bL35 from Geobacter metallireducens (strain ATCC 53774 / DSM 7210 / GS-15).